The primary structure comprises 569 residues: Probable ABC transporter permease protein y4fN (569 aa).

Helical transmembrane passes span 10-30 (VFYW…LLVP), 68-88 (VWMT…QVAV), 98-118 (GFLK…AAAG), 121-141 (FTYG…PSLP), 145-165 (FIGW…FHFL), 196-216 (VVLP…LITA), 247-267 (PDMA…LILL), 304-324 (LAYL…LFSF), 363-383 (MSSI…PIMV), 395-415 (ICFV…LIVA), 426-446 (LVLL…SLPL), 480-500 (VVLP…FNNL), and 534-554 (AAVS…VILI). Residues 64–268 (LWNTVWMTAA…LVLMGLILLS (205 aa)) enclose the ABC transmembrane type-1 1 domain. The 195-residue stretch at 357 to 551 (FFNSMLMSSI…TLIMAFSLAV (195 aa)) folds into the ABC transmembrane type-1 2 domain.

This sequence belongs to the binding-protein-dependent transport system permease family. CysTW subfamily.

It localises to the cell inner membrane. In terms of biological role, probably part of the binding-protein-dependent transport system y4fNOP. Probably responsible for the translocation of the substrate across the membrane. The protein is Probable ABC transporter permease protein y4fN of Sinorhizobium fredii (strain NBRC 101917 / NGR234).